The following is a 131-amino-acid chain: Small ribosomal subunit protein eS17A (131 aa).

The protein belongs to the eukaryotic ribosomal protein eS17 family. In terms of assembly, component of the small ribosomal subunit (SSU). Mature yeast ribosomes consist of a small (40S) and a large (60S) subunit. The 40S small subunit contains 1 molecule of ribosomal RNA (18S rRNA) and at least 33 different proteins. The large 60S subunit contains 3 rRNA molecules (25S, 5.8S and 5S rRNA) and at least 46 different proteins.

The protein localises to the cytoplasm. In terms of biological role, component of the ribosome, a large ribonucleoprotein complex responsible for the synthesis of proteins in the cell. The small ribosomal subunit (SSU) binds messenger RNAs (mRNAs) and translates the encoded message by selecting cognate aminoacyl-transfer RNA (tRNA) molecules. The large subunit (LSU) contains the ribosomal catalytic site termed the peptidyl transferase center (PTC), which catalyzes the formation of peptide bonds, thereby polymerizing the amino acids delivered by tRNAs into a polypeptide chain. The nascent polypeptides leave the ribosome through a tunnel in the LSU and interact with protein factors that function in enzymatic processing, targeting, and the membrane insertion of nascent chains at the exit of the ribosomal tunnel. The protein is Small ribosomal subunit protein eS17A (rps1701) of Schizosaccharomyces pombe (strain 972 / ATCC 24843) (Fission yeast).